The sequence spans 1023 residues: Protein FAM13A (1023 aa).

Positions 43 to 231 (VSLQELERQG…KILENYNTLF (189 aa)) constitute a Rho-GAP domain. The tract at residues 269–290 (LERDMPKPPPKTKIPKSRSEGS) is disordered. S345 carries the phosphoserine modification. 2 disordered regions span residues 381–437 (VNNS…SGFN) and 459–562 (CAGE…EVPQ). Residues 384–405 (SGGQSSEDSESGTLSASSATSA) are compositionally biased toward low complexity. 2 stretches are compositionally biased toward basic and acidic residues: residues 412 to 427 (SKEQ…KGLI) and 509 to 524 (SDER…HTQH). A compositionally biased stretch (polar residues) spans 536 to 549 (PSLSDTKQQRNQDA). Phosphoserine is present on residues S597 and S617. Disordered stretches follow at residues 628–663 (QYLD…QEDL) and 726–759 (ISEE…KKQE). Residues 666–730 (AQLTRRIQSL…ESKLKISEED (65 aa)) are a coiled coil. S727 carries the post-translational modification Phosphoserine. A Phosphothreonine modification is found at T732. Residues 738-748 (RSNTLPKSFGS) show a composition bias toward polar residues. Basic and acidic residues predominate over residues 750-759 (LEKEDEKKQE). Residues 946–978 (ASIPELLEHLQEMREEKKRIRKKLRDFEDNFFR) adopt a coiled-coil conformation.

This sequence belongs to the FAM13 family. In terms of tissue distribution, isoform 1 is widely expressed, with highest expression in skeletal muscle, thymus, brain and lung. Isoform 3 is less abundant than isoform 1 and predominantly expressed in kidney, pancreas, liver, lung and thymus.

The polypeptide is Protein FAM13A (FAM13A) (Homo sapiens (Human)).